We begin with the raw amino-acid sequence, 122 residues long: MIIKRSRKELRRIRHLRIRKKITGTPERPRLAVYKSLRYIYAQIIDDTKGHTLVAASSLEKELRSQLKSTKNIEAAKLVGEVIAKRALEKGIKRVVFDRGGFLYHGKVKALADSARAAGLEF.

The protein belongs to the universal ribosomal protein uL18 family. Part of the 50S ribosomal subunit; part of the 5S rRNA/L5/L18/L25 subcomplex. Contacts the 5S and 23S rRNAs.

Its function is as follows. This is one of the proteins that bind and probably mediate the attachment of the 5S RNA into the large ribosomal subunit, where it forms part of the central protuberance. The sequence is that of Large ribosomal subunit protein uL18 from Dictyoglomus turgidum (strain DSM 6724 / Z-1310).